Consider the following 83-residue polypeptide: Hainantoxin-III 2 (83 aa).

A signal peptide spans 1–21 (MKASMYLALAGLVLLFVVGYA). The propeptide occupies 22 to 48 (SESEEKEFPRELLSKIFAVDDFKGEER). Disulfide bonds link C50–C65, C57–C70, and C64–C77. L81 carries the post-translational modification Leucine amide.

The protein belongs to the neurotoxin 10 (Hwtx-1) family. 15 (Hntx-3) subfamily. Monomer. Expressed by the venom gland.

The protein localises to the secreted. Its function is as follows. Selective antagonist of neuronal tetrodotoxin (TTX)-sensitive voltage-gated sodium channels (IC(50)=1270 nM on Nav1.1/SCN1A, 270 nM on Nav1.2/SCN2A, 491 nM on Nav1.3/SCN3A and 232 nM on Nav1.7/SCN9A). This toxin suppress Nav1.7 current amplitude without significantly altering the activation, inactivation, and repriming kinetics. Short extreme depolarizations partially activate the toxin-bound channel, indicating voltage-dependent inhibition of this toxin. This toxin increases the deactivation of the Nav1.7 current after extreme depolarizations. The toxin-Nav1.7 complex is gradually dissociated upon prolonged strong depolarizations in a voltage-dependent manner, and the unbound toxin rebinds to Nav1.7 after a long repolarization. Moreover, analysis of chimeric channels showed that the DIIS3-S4 linker is critical for toxin binding to Nav1.7. These data are consistent with this toxin interacting with Nav1.7 site 4 and trapping the domain II voltage sensor in the closed state. In Cyriopagopus hainanus (Chinese bird spider), this protein is Hainantoxin-III 2.